The following is a 134-amino-acid chain: Thionin-2.2 (134 aa).

An N-terminal signal peptide occupies residues 1–24; sequence MEGKTVISSLLIMSLVLAQIQVEA. 3 cysteine pairs are disulfide-bonded: Cys27/Cys64, Cys28/Cys56, and Cys40/Cys50. A propeptide spans 71–134 (acidic domain); the sequence is DILENSGDAV…GGSTAAVKSA (64 aa).

The protein belongs to the plant thionin (TC 1.C.44) family. As to expression, low basal expression in seedlings. Also detected in rosette leaves.

The protein resides in the secreted. In terms of biological role, thionins are small plant proteins which are toxic to animal cells. They seem to exert their toxic effect at the level of the cell membrane. Their precise function is not known. The sequence is that of Thionin-2.2 (THI2.2) from Arabidopsis thaliana (Mouse-ear cress).